A 415-amino-acid chain; its full sequence is Lupus La protein homolog (415 aa).

Residues 7–99 form the HTH La-type RNA-binding domain; that stretch reads NEKMAALEAK…RRSPSRPLPE (93 aa). A phosphoserine mark is found at Ser92 and Ser94. The RRM domain maps to 111-187; the sequence is RSVYIKGFPT…TNLLILFKED (77 aa). N6-acetyllysine is present on Lys116. Phosphothreonine is present on Thr120. Lys128 and Lys327 each carry N6-acetyllysine. A xRRM domain is found at 226–343; that stretch reads EGKMGCLLKF…HAARRFKGSH (118 aa). A disordered region spans residues 323 to 415; the sequence is ESLNKWKSKG…KKRENGARDK (93 aa). Positions 328–341 are enriched in basic residues; the sequence is WKSKGGHAARRFKG. The residue at position 356 (Lys356) is an N6-acetyllysine. Position 377 is a phosphothreonine (Thr377). The span at 377-415 shows a compositional bias: basic and acidic residues; the sequence is TRFDDDDHRRGPVKRGIDGRDREEPASKHKKRENGARDK.

As to quaternary structure, interacts with DDX15. May interact with RUFY1. In terms of processing, phosphorylated.

It localises to the nucleus. Functionally, binds to the 3' poly(U) terminus of nascent RNA polymerase III transcripts, protecting them from exonuclease digestion and facilitating their folding and maturation. In Rattus norvegicus (Rat), this protein is Lupus La protein homolog (Ssb).